The sequence spans 430 residues: Ribosomal protein uS12 methylthiotransferase RimO (430 aa).

Positions 1–116 (MKIGIKVLGC…IAEAIEKATP (116 aa)) constitute an MTTase N-terminal domain. Positions 10, 46, 79, 146, 150, and 153 each coordinate [4Fe-4S] cluster. Positions 132-362 (SCNNSFAYVK…LIFQSQIAYE (231 aa)) constitute a Radical SAM core domain. The TRAM domain maps to 365–430 (KRFVGKNLNV…DEYDLKGELI (66 aa)).

It belongs to the methylthiotransferase family. RimO subfamily. [4Fe-4S] cluster is required as a cofactor.

The protein resides in the cytoplasm. It catalyses the reaction L-aspartate(89)-[ribosomal protein uS12]-hydrogen + (sulfur carrier)-SH + AH2 + 2 S-adenosyl-L-methionine = 3-methylsulfanyl-L-aspartate(89)-[ribosomal protein uS12]-hydrogen + (sulfur carrier)-H + 5'-deoxyadenosine + L-methionine + A + S-adenosyl-L-homocysteine + 2 H(+). In terms of biological role, catalyzes the methylthiolation of an aspartic acid residue of ribosomal protein uS12. In Pseudothermotoga lettingae (strain ATCC BAA-301 / DSM 14385 / NBRC 107922 / TMO) (Thermotoga lettingae), this protein is Ribosomal protein uS12 methylthiotransferase RimO.